Consider the following 95-residue polypeptide: uncharacterized protein (95 aa).

This is an uncharacterized protein from Human adenovirus B serotype 7 (HAdV-7).